The chain runs to 270 residues: Multi-heme protein MamP (270 aa).

At 1-6 (MNSKLV) the chain is on the cytoplasmic side. Over 7 to 20 (LLVVGVVFALVLVI) the chain traverses the membrane. The Lumenal portion of the chain corresponds to 21–270 (GRQGGVVAPQ…GPCEACHVIN (250 aa)). Residues 84–201 (NLKVFEGHWQ…GGLGFAQLEG (118 aa)) form a PDZ region. The MCR (magnetochrome) 1 motif lies at 205–225 (ILPGDPRPHGYRGACTDCHPV). Positions 219, 222, 223, 263, 266, and 267 each coordinate heme. Positions 245–269 (ITRDAVTRGVSPHEVRGPCEACHVI) match the MCR 2 motif.

The protein belongs to the magnetosome MamP family. In terms of assembly, homodimer. Heme serves as cofactor. Subject to proteolytic cleavage which requires both MamE and MamO.

Its subcellular location is the cell inner membrane. Its function is as follows. Involved in redox-control of magnetite formation. Oxidizes Fe(2+) at alkaline pH; successively forms ferrihydrite (Fe(3+)(2)O(3) 0.5 H(2)O) then magnetite (Fe(3)O(4)) from an Fe(2+) solution. The polypeptide is Multi-heme protein MamP (Magnetospirillum gryphiswaldense (strain DSM 6361 / JCM 21280 / NBRC 15271 / MSR-1)).